Reading from the N-terminus, the 429-residue chain is Tol-Pal system protein TolB (429 aa).

Positions 1–28 are cleaved as a signal peptide; that stretch reads MSITPSFSRRSVVSLLAAGAFSSMSAFA.

This sequence belongs to the TolB family. In terms of assembly, the Tol-Pal system is composed of five core proteins: the inner membrane proteins TolA, TolQ and TolR, the periplasmic protein TolB and the outer membrane protein Pal. They form a network linking the inner and outer membranes and the peptidoglycan layer.

The protein resides in the periplasm. Functionally, part of the Tol-Pal system, which plays a role in outer membrane invagination during cell division and is important for maintaining outer membrane integrity. This Polaromonas naphthalenivorans (strain CJ2) protein is Tol-Pal system protein TolB.